We begin with the raw amino-acid sequence, 601 residues long: N-acetyltransferase ESCO2 (601 aa).

Serine 29, serine 75, serine 223, and serine 244 each carry phosphoserine. The tract at residues 222–243 (SSLENEPSLGRTQKSKSEVIED) is disordered. Over residues 282 to 305 (KEKLIKDSSDDRVSSKEHKVDKNE) the composition is skewed to basic and acidic residues. The interval 282–315 (KEKLIKDSSDDRVSSKEHKVDKNEAFSSEDSLGE) is disordered. A compositionally biased stretch (polar residues) spans 306-315 (AFSSEDSLGE). At serine 312 the chain carries Phosphoserine. A CCHH-type zinc finger spans residues 387–411 (TVCKSCGMIYTASNPEDEMQHVQHH). The residue at position 512 (serine 512) is a Phosphoserine.

Belongs to the acetyltransferase family. ECO subfamily. In terms of tissue distribution, widely expressed in fetal tissues. In adult, it is expressed in thymus, placenta and small intestine.

It is found in the nucleus. Its subcellular location is the chromosome. It catalyses the reaction L-lysyl-[protein] + acetyl-CoA = N(6)-acetyl-L-lysyl-[protein] + CoA + H(+). Acetyltransferase required for the establishment of sister chromatid cohesion. Couples the processes of cohesion and DNA replication to ensure that only sister chromatids become paired together. In contrast to the structural cohesins, the deposition and establishment factors are required only during the S phase. Acetylates the cohesin component SMC3. The sequence is that of N-acetyltransferase ESCO2 from Homo sapiens (Human).